The sequence spans 263 residues: Tryptophan synthase alpha chain (263 aa).

Catalysis depends on proton acceptor residues E49 and D60.

This sequence belongs to the TrpA family. As to quaternary structure, tetramer of two alpha and two beta chains.

The catalysed reaction is (1S,2R)-1-C-(indol-3-yl)glycerol 3-phosphate + L-serine = D-glyceraldehyde 3-phosphate + L-tryptophan + H2O. Its pathway is amino-acid biosynthesis; L-tryptophan biosynthesis; L-tryptophan from chorismate: step 5/5. In terms of biological role, the alpha subunit is responsible for the aldol cleavage of indoleglycerol phosphate to indole and glyceraldehyde 3-phosphate. This is Tryptophan synthase alpha chain from Jannaschia sp. (strain CCS1).